A 238-amino-acid polypeptide reads, in one-letter code: Probable transglycosylase IsaA (238 aa).

A signal peptide spans 1–29; the sequence is MKKTVIASSLAVALGVTGYALTTDNSAHA. Residues 115 to 157 are disordered; that stretch reads ASTQSVSSNQQSSNTNVEAVSAPKTTSYSASTSSSSSASTGGS. Low complexity-rich tracts occupy residues 116-131 and 139-157; these read STQS…NTNV and TTSY…TGGS.

The protein belongs to the transglycosylase family. IsaA subfamily.

The protein localises to the secreted. Its function is as follows. Is able to cleave peptidoglycan. The polypeptide is Probable transglycosylase IsaA (isaA) (Staphylococcus haemolyticus (strain JCSC1435)).